Consider the following 143-residue polypeptide: Root meristem growth factor 10 (143 aa).

Positions 1-27 (MDMLRSACFYFLLIVFVILSWSLLCDS) are cleaved as a signal peptide. Positions 28–130 (RHLGHMEKKL…SDQEHPGFNL (103 aa)) are excised as a propeptide. N-linked (GlcNAc...) asparagine glycosylation is present at N60. Residues 74–83 (NHGDNGQING) are compositionally biased toward polar residues. Residues 74 to 143 (NHGDNGQING…QPTTHPPHHN (70 aa)) form a disordered region. Positions 92 to 99 (VKRASDKK) match the Nuclear localization signal motif. Y132 is subject to Sulfotyrosine. P140 bears the Hydroxyproline mark.

This sequence belongs to the RGF family. In terms of assembly, binds to LRR receptor-like serine/threonine-protein kinases RGI1, RGI2 and RGI3 to trigger their dimerization with SERK proteins and subsequent signaling. The tyrosine sulfation is critical for the function of the peptide. Expressed in root tips.

It localises to the secreted. The protein localises to the nucleus. Maintains the postembryonic root stem cell niche by regulating the expression levels and patterns of the transcription factor PLETHORA (PLT), mainly at the post-transcriptional level. Promotes root elongation. The polypeptide is Root meristem growth factor 10 (Arabidopsis thaliana (Mouse-ear cress)).